A 610-amino-acid polypeptide reads, in one-letter code: Elongation factor 4 (610 aa).

In terms of domain architecture, tr-type G spans 11–193; it reads EKIRNFSIIA…QIVEKVPAPT (183 aa). GTP contacts are provided by residues 23 to 28 and 140 to 143; these read DHGKST and NKID.

Belongs to the TRAFAC class translation factor GTPase superfamily. Classic translation factor GTPase family. LepA subfamily.

It is found in the cell membrane. The enzyme catalyses GTP + H2O = GDP + phosphate + H(+). Required for accurate and efficient protein synthesis under certain stress conditions. May act as a fidelity factor of the translation reaction, by catalyzing a one-codon backward translocation of tRNAs on improperly translocated ribosomes. Back-translocation proceeds from a post-translocation (POST) complex to a pre-translocation (PRE) complex, thus giving elongation factor G a second chance to translocate the tRNAs correctly. Binds to ribosomes in a GTP-dependent manner. The polypeptide is Elongation factor 4 (Streptococcus pyogenes serotype M1).